A 467-amino-acid polypeptide reads, in one-letter code: Mitochondrial adenyl nucleotide antiporter SLC25A23 (467 aa).

Residues 1-148 form a regulatory N-terminal domain region; sequence MRGGSSDAER…DHFLLHSLEN (148 aa). Residues 1 to 187 lie on the Mitochondrial intermembrane side of the membrane; that stretch reads MRGGSSDAER…EKLTGMWWKQ (187 aa). EF-hand domains follow at residues 9 to 44, 76 to 111, and 112 to 147; these read ERRQ…LGRG, EREQ…LGIS, and ISLE…HSLE. Ca(2+) contacts are provided by Asp-22, Asn-24, Asp-26, Arg-28, and Glu-33. Positions 39–61 are disordered; the sequence is ARLGRGDPDRAQQGVSSDWDADP. Ca(2+) contacts are provided by Asp-89, Asn-91, Asp-93, His-95, and Glu-100. A linker region region spans residues 149–158; it reads VEDVLYFWKH. The C-terminal transmembrane transporter domain stretch occupies residues 164-467; that stretch reads IGECLTVPDE…MKQALGVTSR (304 aa). Solcar repeat units follow at residues 182 to 268, 276 to 361, and 373 to 461; these read GMWW…IKRA, LHVQ…LKNR, and PGIL…MKQA. The chain crosses the membrane as a helical span at residues 188 to 205; it reads LVAGAVAGAVSRTGTAPL. At 206–242 the chain is on the mitochondrial matrix side; the sequence is DRLKVFMQVHASKSNRLNILGGLRNMIQEGGVLSLWR. A helical membrane pass occupies residues 243-262; that stretch reads GNGINVLKIAPESAIKFMAY. Topologically, residues 263 to 285 are mitochondrial intermembrane; that stretch reads EQIKRAIRGQQETLHVQERFVAG. Residues 286–299 traverse the membrane as a helical segment; sequence SLAGATAQTIIYPM. Residues 300–335 are Mitochondrial matrix-facing; that stretch reads EVLKTRLTLRRTGQYKGLLDCAKRILEREGPRAFYR. A helical membrane pass occupies residues 336 to 355; it reads GYLPNVLGIIPYAGIDLAVY. Residues 356–378 lie on the Mitochondrial intermembrane side of the membrane; that stretch reads ETLKNRWLQQYSHESANPGILVL. Residues 379–396 traverse the membrane as a helical segment; the sequence is LGCGTISSTCGQIASYPL. Residues 397–435 lie on the Mitochondrial matrix side of the membrane; it reads ALVRTRMQAQASIEGGPQVSMVGLLRHILSQEGVWGLYR. The helical transmembrane segment at 436-455 threads the bilayer; sequence GIAPNFMKVIPAVSISYVVY. Over 456–467 the chain is Mitochondrial intermembrane; the sequence is ENMKQALGVTSR.

The protein belongs to the mitochondrial carrier (TC 2.A.29) family. Interacts with MCU. Interacts with MICU1.

The protein localises to the mitochondrion inner membrane. The enzyme catalyses Mg(2+)(out) + phosphate(in) + ATP(out) = Mg(2+)(in) + phosphate(out) + ATP(in). The catalysed reaction is ADP(out) + phosphate(in) + H(+)(out) = ADP(in) + phosphate(out) + H(+)(in). It catalyses the reaction AMP(out) + phosphate(in) = AMP(in) + phosphate(out). It carries out the reaction phosphate(in) + ATP(out) + 2 H(+)(out) = phosphate(out) + ATP(in) + 2 H(+)(in). The enzyme catalyses dADP(in) + ADP(out) = dADP(out) + ADP(in). The catalysed reaction is Mg(2+)(in) + ADP(out) + ATP(in) + H(+)(out) = Mg(2+)(out) + ADP(in) + ATP(out) + H(+)(in). It catalyses the reaction ADP(out) + diphosphate(in) = ADP(in) + diphosphate(out). It carries out the reaction dAMP(in) + ADP(out) + H(+)(out) = dAMP(out) + ADP(in) + H(+)(in). The enzyme catalyses 3'-AMP(in) + ADP(out) + H(+)(out) = 3'-AMP(out) + ADP(in) + H(+)(in). The catalysed reaction is dAMP(out) + phosphate(in) = dAMP(in) + phosphate(out). It catalyses the reaction 3'-AMP(out) + phosphate(in) = 3'-AMP(in) + phosphate(out). It carries out the reaction dADP(out) + phosphate(in) + H(+)(out) = dADP(in) + phosphate(out) + H(+)(in). Its activity is regulated as follows. Activated by an increase in cytosolic calcium levels that induce a conformational change of the N-terminal regulatory domain, uncapping the channel and allowing transport. Electroneutral antiporter that mediates the transport of adenine nucleotides through the inner mitochondrial membrane. Originally identified as an ATP-magnesium/inorganic phosphate antiporter, it also acts as a broad specificity adenyl nucleotide antiporter. By regulating the mitochondrial matrix adenine nucleotide pool could adapt to changing cellular energetic demands and indirectly regulate adenine nucleotide-dependent metabolic pathways. Also acts as a regulator of mitochondrial calcium uptake and can probably transport trace amounts of other divalent metal cations in complex with ATP. In vitro, a low activity is also observed with guanyl and pyrimidine nucleotides. This Mus musculus (Mouse) protein is Mitochondrial adenyl nucleotide antiporter SLC25A23.